A 57-amino-acid polypeptide reads, in one-letter code: COP9 signalosome complex subunit 9 (57 aa).

Phosphothreonine is present on threonine 26.

It belongs to the CSN9 family. Component of the CSN complex, composed of COPS1/GPS1, COPS2, COPS3, COPS4, COPS5, COPS6, COPS7 (COPS7A or COPS7B), COPS8 and COPS9. In the complex, it interacts directly with COPS3, COPS5 and COPS6.

The protein localises to the nucleus. The protein resides in the cytoplasm. It is found in the nucleoplasm. Its function is as follows. Component of the COP9 signalosome complex (CSN), a complex involved in various cellular and developmental processes. The CSN complex is an essential regulator of the ubiquitin (Ubl) conjugation pathway by mediating the deneddylation of the cullin subunits of SCF-type E3 ligase complexes, leading to decrease the Ubl ligase activity of SCF-type complexes such as SCF, CSA or DDB2. The complex is also involved in phosphorylation of p53/TP53, c-jun/JUN, IkappaBalpha/NFKBIA, ITPK1 and IRF8/ICSBP, possibly via its association with CK2 and PKD kinases. CSN-dependent phosphorylation of TP53 and JUN promotes and protects degradation by the Ubl system, respectively. Plays a role in cell proliferation. In Bos taurus (Bovine), this protein is COP9 signalosome complex subunit 9.